A 288-amino-acid chain; its full sequence is Pantothenate synthetase (288 aa).

30–37 contributes to the ATP binding site; sequence MGFLHEGH. Residue His37 is the Proton donor of the active site. Gln61 contributes to the (R)-pantoate binding site. Gln61 serves as a coordination point for beta-alanine. 147-150 serves as a coordination point for ATP; the sequence is GLKD. A (R)-pantoate-binding site is contributed by Gln153. Residues Val176 and 184 to 187 each bind ATP; that span reads KSSR.

Belongs to the pantothenate synthetase family. Homodimer.

The protein resides in the cytoplasm. The catalysed reaction is (R)-pantoate + beta-alanine + ATP = (R)-pantothenate + AMP + diphosphate + H(+). Its pathway is cofactor biosynthesis; (R)-pantothenate biosynthesis; (R)-pantothenate from (R)-pantoate and beta-alanine: step 1/1. Its function is as follows. Catalyzes the condensation of pantoate with beta-alanine in an ATP-dependent reaction via a pantoyl-adenylate intermediate. This chain is Pantothenate synthetase, found in Bacillus pumilus (strain SAFR-032).